We begin with the raw amino-acid sequence, 201 residues long: Small ribosomal subunit protein uS5 (201 aa).

The segment at 1–28 (MARGEQQRGEGGQRRDRRDRNAPEERVD) is disordered. The S5 DRBM domain maps to 31 to 94 (IVEKLVHINR…EEAKKTMIRV (64 aa)). Residues 173 to 201 (QIAAKRGKKVGDILGRRADGASAPEAIEG) form a disordered region. Over residues 181-191 (KVGDILGRRAD) the composition is skewed to basic and acidic residues.

Belongs to the universal ribosomal protein uS5 family. Part of the 30S ribosomal subunit. Contacts proteins S4 and S8.

Its function is as follows. With S4 and S12 plays an important role in translational accuracy. Located at the back of the 30S subunit body where it stabilizes the conformation of the head with respect to the body. The sequence is that of Small ribosomal subunit protein uS5 from Caulobacter vibrioides (strain ATCC 19089 / CIP 103742 / CB 15) (Caulobacter crescentus).